An 835-amino-acid polypeptide reads, in one-letter code: Protein translocase subunit SecA (835 aa).

ATP-binding positions include Q85, 103-107 (GEGKT), and D495. Residues 806–835 (KVFLNNDSSDDESSKKRRTRKVRTSKKPWN) form a disordered region. Basic residues predominate over residues 820 to 835 (KKRRTRKVRTSKKPWN).

The protein belongs to the SecA family. Monomer and homodimer. Part of the essential Sec protein translocation apparatus which comprises SecA, SecYEG and auxiliary proteins SecDF. Other proteins may also be involved.

It is found in the cell membrane. It localises to the cytoplasm. It carries out the reaction ATP + H2O + cellular proteinSide 1 = ADP + phosphate + cellular proteinSide 2.. Its function is as follows. Part of the Sec protein translocase complex. Interacts with the SecYEG preprotein conducting channel. Has a central role in coupling the hydrolysis of ATP to the transfer of proteins into and across the cell membrane, serving as an ATP-driven molecular motor driving the stepwise translocation of polypeptide chains across the membrane. The sequence is that of Protein translocase subunit SecA from Onion yellows phytoplasma (strain OY-M).